Reading from the N-terminus, the 650-residue chain is MIRLQTPIIKETIHPKKTPTALNWLYPEKIIHNISSKALIDNIYSENYQHILVGLISLIEPWVYLHTNLKLIDNGHLPLIDDETIILISSGEYMIDYYYRIEVNKYGKQTDLFDKLLQSVNNSNKDFFDKYKNYFKISGIDFDLNINTSNTNRFEIIEKYVIESLVEILDKITDGLDAIYNYDNQRDVLLPIFNNNYNNDNVESIDIDYDLDLLKKVKTIMANPTFKFDKDLMFHPTKSLIMEARETNYRVFNDLGNQIDAIMKNSNNIMIFPYAYFLIKNVHGKNDYPNSSYKKFDNIIINQLNQYFIELSNGEIYSNYHKNAFFVDSINGFRSINHDLYLKRFNDFVPEENNNNAFYDTIKFPNITQVNNMEIIPSDSFYIYNQGKEVIDSIVEKKHNIVVNQSKAKATRSNTYIIDKDTIELNLSVVFKGLLFNNKPVVYPISSNIVTFEIERINSTNYVDNVNVPYQVLQIKNPKVTIKTYDRKTLINKLMKKLFDEDHFLPWYIPNYNQNIVKLLFLINLDKHEYIDFLKKLLQTQNKKELVDYSLYYCFDYQSYSFYNLIWIDPMTVDRYYEIQYLIKFIIIMDNILLLPDVSLRKILIDFNSSYGWYDPNVDLSSVKVSYQNFKNNLLNTLNELDDIYHNKSK.

The protein belongs to the mimivirus L515/L516 family.

It localises to the virion. This is an uncharacterized protein from Acanthamoeba polyphaga (Amoeba).